The sequence spans 232 residues: 7-cyano-7-deazaguanine synthase (232 aa).

Position 8 to 18 (Phe-8 to Leu-18) interacts with ATP. Zn(2+) is bound by residues Cys-187, Cys-196, Cys-199, and Cys-202.

It belongs to the QueC family. Zn(2+) serves as cofactor.

It carries out the reaction 7-carboxy-7-deazaguanine + NH4(+) + ATP = 7-cyano-7-deazaguanine + ADP + phosphate + H2O + H(+). It functions in the pathway purine metabolism; 7-cyano-7-deazaguanine biosynthesis. Functionally, catalyzes the ATP-dependent conversion of 7-carboxy-7-deazaguanine (CDG) to 7-cyano-7-deazaguanine (preQ(0)). In Vibrio campbellii (strain ATCC BAA-1116), this protein is 7-cyano-7-deazaguanine synthase.